The primary structure comprises 587 residues: MKEFKVTTGPLPGSEKIYVEGERFPFLRVPMRRIRMSDTILENGEREKNEDVVVYDTSGPYTDTSYEVNLHRGVPKIREQWIEDRGDTVRLEGLSSEYGRIRQSDASLEKLRYEHVCTRPRAAKDGCATQLYYARQGIVTPEMEFVAIRENQLIDQVRTRYRAEEGEPLGAVIPRKITPEFVRDEIAAGRAILPANINHPESEPMIIGRNFLVKINANIGNSPISSTIEEEVEKAVWAIRWGADTVMDLSTGDHIHETREWIIRNSPVPIGTVPLYQTLEKVQGDVTKLNWEIFRDTLIEQAEQGVDYFTIHAGLRWHHVPLTLRRLTGIVSRGGSIIANWCTTHKRESFIYEHFEEICQILARYDVAISLGDGLRPGCIHDANDAAQIAELKTLGELTEIAWKYNVQTIIEGPGHVPMHKIRENMEIQLEACHGAPFYTLGPLVSDVASGYDHITSAIGAAQIGWFGTAMLCYVTQKEHLGLPNREDVREGVVTYRLAAHAADLAKGHPTAYWRDYMMSKARFEFRWKDQFHLSLDPEKAIQFHDATLPDEGHKEAHFCSMCGEHFCSMRANKNFRKLLNEEAVSK.

Substrate is bound by residues asparagine 218, methionine 247, tyrosine 276, histidine 312, 332 to 334 (SRG), 373 to 376 (DGLR), and glutamate 412. Zn(2+) is bound at residue histidine 416. Tyrosine 439 lines the substrate pocket. Histidine 480 is a Zn(2+) binding site. [4Fe-4S] cluster is bound by residues cysteine 560, cysteine 563, and cysteine 568.

The protein belongs to the ThiC family. [4Fe-4S] cluster serves as cofactor.

It carries out the reaction 5-amino-1-(5-phospho-beta-D-ribosyl)imidazole + S-adenosyl-L-methionine = 4-amino-2-methyl-5-(phosphooxymethyl)pyrimidine + CO + 5'-deoxyadenosine + formate + L-methionine + 3 H(+). Its pathway is cofactor biosynthesis; thiamine diphosphate biosynthesis. Functionally, catalyzes the synthesis of the hydroxymethylpyrimidine phosphate (HMP-P) moiety of thiamine from aminoimidazole ribotide (AIR) in a radical S-adenosyl-L-methionine (SAM)-dependent reaction. The polypeptide is Phosphomethylpyrimidine synthase (Porphyromonas gingivalis (strain ATCC BAA-308 / W83)).